The primary structure comprises 279 residues: Esterase CG5412 (279 aa).

Catalysis depends on charge relay system residues serine 133, aspartate 191, and histidine 218. The tract at residues 249-279 is disordered; sequence QSGNASFVDSGAEDDNDAEVAAMTAELDESD.

The protein belongs to the LovG family.

This Drosophila melanogaster (Fruit fly) protein is Esterase CG5412.